The following is a 426-amino-acid chain: Enolase (426 aa).

A (2R)-2-phosphoglycerate-binding site is contributed by Gln165. Glu207 acts as the Proton donor in catalysis. Mg(2+) contacts are provided by Asp244, Glu285, and Asp312. (2R)-2-phosphoglycerate is bound by residues Lys337, Arg366, Ser367, and Lys388. Residue Lys337 is the Proton acceptor of the active site.

Belongs to the enolase family. Requires Mg(2+) as cofactor.

The protein resides in the cytoplasm. Its subcellular location is the secreted. It localises to the cell surface. It carries out the reaction (2R)-2-phosphoglycerate = phosphoenolpyruvate + H2O. The protein operates within carbohydrate degradation; glycolysis; pyruvate from D-glyceraldehyde 3-phosphate: step 4/5. Its function is as follows. Catalyzes the reversible conversion of 2-phosphoglycerate (2-PG) into phosphoenolpyruvate (PEP). It is essential for the degradation of carbohydrates via glycolysis. This is Enolase from Cyanothece sp. (strain PCC 7425 / ATCC 29141).